We begin with the raw amino-acid sequence, 158 residues long: 2-C-methyl-D-erythritol 2,4-cyclodiphosphate synthase (158 aa).

The a divalent metal cation site is built by aspartate 9 and histidine 11. Residues aspartate 9–histidine 11 and histidine 35–serine 36 each bind 4-CDP-2-C-methyl-D-erythritol 2-phosphate. Histidine 43 serves as a coordination point for a divalent metal cation. 4-CDP-2-C-methyl-D-erythritol 2-phosphate-binding positions include aspartate 57 to glycine 59 and arginine 143.

The protein belongs to the IspF family. As to quaternary structure, homotrimer. The cofactor is a divalent metal cation.

The catalysed reaction is 4-CDP-2-C-methyl-D-erythritol 2-phosphate = 2-C-methyl-D-erythritol 2,4-cyclic diphosphate + CMP. It functions in the pathway isoprenoid biosynthesis; isopentenyl diphosphate biosynthesis via DXP pathway; isopentenyl diphosphate from 1-deoxy-D-xylulose 5-phosphate: step 4/6. In terms of biological role, involved in the biosynthesis of isopentenyl diphosphate (IPP) and dimethylallyl diphosphate (DMAPP), two major building blocks of isoprenoid compounds. Catalyzes the conversion of 4-diphosphocytidyl-2-C-methyl-D-erythritol 2-phosphate (CDP-ME2P) to 2-C-methyl-D-erythritol 2,4-cyclodiphosphate (ME-CPP) with a corresponding release of cytidine 5-monophosphate (CMP). This is 2-C-methyl-D-erythritol 2,4-cyclodiphosphate synthase from Chromobacterium violaceum (strain ATCC 12472 / DSM 30191 / JCM 1249 / CCUG 213 / NBRC 12614 / NCIMB 9131 / NCTC 9757 / MK).